The chain runs to 103 residues: Pyrimidine/purine nucleoside phosphorylase (103 aa).

It belongs to the nucleoside phosphorylase PpnP family.

The catalysed reaction is a purine D-ribonucleoside + phosphate = a purine nucleobase + alpha-D-ribose 1-phosphate. It carries out the reaction adenosine + phosphate = alpha-D-ribose 1-phosphate + adenine. The enzyme catalyses cytidine + phosphate = cytosine + alpha-D-ribose 1-phosphate. It catalyses the reaction guanosine + phosphate = alpha-D-ribose 1-phosphate + guanine. The catalysed reaction is inosine + phosphate = alpha-D-ribose 1-phosphate + hypoxanthine. It carries out the reaction thymidine + phosphate = 2-deoxy-alpha-D-ribose 1-phosphate + thymine. The enzyme catalyses uridine + phosphate = alpha-D-ribose 1-phosphate + uracil. It catalyses the reaction xanthosine + phosphate = alpha-D-ribose 1-phosphate + xanthine. Functionally, catalyzes the phosphorolysis of diverse nucleosides, yielding D-ribose 1-phosphate and the respective free bases. Can use uridine, adenosine, guanosine, cytidine, thymidine, inosine and xanthosine as substrates. Also catalyzes the reverse reactions. The chain is Pyrimidine/purine nucleoside phosphorylase from Shewanella sp. (strain ANA-3).